We begin with the raw amino-acid sequence, 435 residues long: MSNFSPREIVSELDRYIIGQKDAKRAVAIALRNRWRRQQLDDELRDEVMPKNILMIGPTGVGKTEISRRLAKLAGAPFVKVEATKFTEVGYVGRDVEQIVRDLVEVGISLVREKRRAEVKAKAHQNAEERVLDALVGTTASPATRDSFRKKLRANELDDKEIEVDVAEAGSPGGAFEIPGMPGANIGVLNLSEMFGKALGGRTKKVKTTVKDSYALLVNDESDKLLDNEQIQREAVAAAENDGIVFLDEIDKIATREGGIGAGVSREGVQRDLLPLVEGTTVATKYGPVKTDHILFIASGAFHVAKPSDLLPELQGRLPIRVELRALTKEDFRRILTETEASLIRQYKALLETEGVALDFTEDAIDALAEVAVQLNANVENIGARRLQTVMERVLDDVSFNAPDRGGQGVTIDAEYVRRHVGDLAANTDLSRYIL.

Residues Ile18, 60-65, Asp248, Glu313, and Arg385 contribute to the ATP site; that span reads GVGKTE.

It belongs to the ClpX chaperone family. HslU subfamily. As to quaternary structure, a double ring-shaped homohexamer of HslV is capped on each side by a ring-shaped HslU homohexamer. The assembly of the HslU/HslV complex is dependent on binding of ATP.

It localises to the cytoplasm. Its function is as follows. ATPase subunit of a proteasome-like degradation complex; this subunit has chaperone activity. The binding of ATP and its subsequent hydrolysis by HslU are essential for unfolding of protein substrates subsequently hydrolyzed by HslV. HslU recognizes the N-terminal part of its protein substrates and unfolds these before they are guided to HslV for hydrolysis. The polypeptide is ATP-dependent protease ATPase subunit HslU (Rhizobium meliloti (strain 1021) (Ensifer meliloti)).